Here is a 133-residue protein sequence, read N- to C-terminus: Small ribosomal subunit protein uS9 (133 aa).

The protein belongs to the universal ribosomal protein uS9 family.

The polypeptide is Small ribosomal subunit protein uS9 (Ureaplasma urealyticum serovar 10 (strain ATCC 33699 / Western)).